The sequence spans 96 residues: Myticin-B (96 aa).

A signal peptide spans 1 to 20 (MKATMLLAVVVAVFVAGTEA). Residues 61-96 (VKFPFGATQDAKSMNELEYTPIMKSMENLDNGMDML) constitute a propeptide, removed in mature form.

Post-translationally, contains four disulfide bonds. In terms of tissue distribution, hemocytes.

The protein localises to the secreted. In terms of biological role, bacteriolytic activity against Gram-positive bacteria M.luteus, B.megaterium and A.viridans and Gram-negative bacteria E.coli D31. Possesses antifungal activity against F.oxysporum. In Mytilus galloprovincialis (Mediterranean mussel), this protein is Myticin-B.